Reading from the N-terminus, the 1510-residue chain is ABC transporter C family MRP4 (1510 aa).

12 helical membrane passes run 12–32 (EAVAATAHAALLALAALLLLL), 55–75 (PAVVVGDGAGGALAAATAGAW), 78–98 (AVLASCAYALLSQVAVLSYEV), 109–129 (ALLLPAVQAVSWAALLALALQ), 138–158 (FPALVRLWWVVSFALCVVIAY), 177–197 (MVANFASVPALGFLCLVGVMG), 319–339 (TFAAVNTIVSYVGPYLISYFV), 342–362 (LSGNIAFPHEGYILASIFFVA), 373–393 (WYLGVDIMGIHVKSGLTAMVY), 427–447 (AWYFHDIWMLPLQIILALAIL), 453–473 (IAMVSTLVATVLSIAASVPVA), and 540–560 (FVFWSSPIFVAVITFGTCILL). An ABC transmembrane type-1 1 domain is found at 320–595 (FAAVNTIVSY…FPDLISMMAQ (276 aa)). Residues 629–852 (VDIKDGAFSW…GTDFNALVSA (224 aa)) form the ABC transporter 1 domain. 664-671 (GVIGSGKS) contacts ATP. A disordered region spans residues 889–925 (LKNKMCENGQPSNTRGIKEKKKKEERKKKRTVQEEER). Positions 906–918 (KEKKKKEERKKKR) are enriched in basic residues. 6 helical membrane-spanning segments follow: residues 945-965 (GTLIPLIILAQTMFQVLQIAS), 985-1005 (SVVLLVVYMSLAFGSSLFVFM), 1060-1082 (IAFRLGGFASTTIQLLGIVAVMS), 1086-1108 (WQVLILIVPMAVACMWMQRYYIA), 1154-1174 (LLDCFARPLFSSLAAIEWLCL), and 1179-1199 (LSTFVFAFCMAILVSFPPGTI). The region spanning 950-1220 (LIILAQTMFQ…GLNLNARMSR (271 aa)) is the ABC transmembrane type-1 2 domain. The region spanning 1267 to 1501 (IELIDLKVRY…KSSMFIQLVS (235 aa)) is the ABC transporter 2 domain. Residue 1301-1308 (GRTGSGKS) participates in ATP binding.

Belongs to the ABC transporter superfamily. ABCC family. Conjugate transporter (TC 3.A.1.208) subfamily. Expressed in roots, leaves, stalks, tassels, silks, developing seeds and developing embryos.

It is found in the membrane. Its function is as follows. ABC transporter that may affect phytic acid transport and compartmentalization. May function directly or indirectly in removing phytic acid from the cytosol or in vesicle trafficking. Required for phytic acid accumulation in developing seeds. Phytic acid is the primary storage form of phosphorus in cereal grains and other plant seeds. This chain is ABC transporter C family MRP4, found in Zea mays (Maize).